The sequence spans 346 residues: NADP-dependent alcohol dehydrogenase C (346 aa).

Residues C41, H63, C94, C97, C100, C108, and C158 each coordinate Zn(2+).

Belongs to the zinc-containing alcohol dehydrogenase family. Zn(2+) serves as cofactor.

It catalyses the reaction a primary alcohol + NADP(+) = an aldehyde + NADPH + H(+). The chain is NADP-dependent alcohol dehydrogenase C (adhC) from Mycobacterium bovis (strain ATCC BAA-935 / AF2122/97).